A 320-amino-acid chain; its full sequence is Malate dehydrogenase (320 aa).

Residues 10–15 and D34 each bind NAD(+); that span reads GAGQIG. The substrate site is built by R83 and R89. NAD(+) is bound by residues N96 and 119-121; that span reads ITN. Substrate contacts are provided by N121 and R152. The Proton acceptor role is filled by H176.

Belongs to the LDH/MDH superfamily. MDH type 3 family.

It carries out the reaction (S)-malate + NAD(+) = oxaloacetate + NADH + H(+). Catalyzes the reversible oxidation of malate to oxaloacetate. This chain is Malate dehydrogenase, found in Methylobacterium sp. (strain 4-46).